We begin with the raw amino-acid sequence, 318 residues long: Pantothenate kinase (318 aa).

Residue 96 to 103 (GSVAVGKS) participates in ATP binding.

It belongs to the prokaryotic pantothenate kinase family.

Its subcellular location is the cytoplasm. It catalyses the reaction (R)-pantothenate + ATP = (R)-4'-phosphopantothenate + ADP + H(+). Its pathway is cofactor biosynthesis; coenzyme A biosynthesis; CoA from (R)-pantothenate: step 1/5. This chain is Pantothenate kinase, found in Coxiella burnetii (strain CbuK_Q154) (Coxiella burnetii (strain Q154)).